The sequence spans 504 residues: UDP-glycosyltransferase UGT4 (504 aa).

A signal peptide spans 1–23 (MTLLRDLLLLYINSLLFINPSIG). The Lumenal portion of the chain corresponds to 24-474 (ENILVFLPTK…SAVIDLYWFQ (451 aa)). 4 N-linked (GlcNAc...) asparagine glycosylation sites follow: Asn-54, Asn-66, Asn-69, and Asn-422. The helical transmembrane segment at 475–495 (YILLDIILFYSLIVLILLCIL) threads the bilayer. At 496–504 (RIFFRMLTK) the chain is on the cytoplasmic side.

It belongs to the UDP-glycosyltransferase family.

Its subcellular location is the microsome membrane. Catalyzes the transfer of a glycosyl group from a UDP-sugar to an acceptor molecule. The polypeptide is UDP-glycosyltransferase UGT4 (Dactylopius coccus (Cochineal)).